The sequence spans 511 residues: Bifunctional purine biosynthesis protein PurH (511 aa).

In terms of domain architecture, MGS-like spans 1-145; it reads MKKRALVSVS…KNHKFVSVIV (145 aa).

Belongs to the PurH family.

The enzyme catalyses (6R)-10-formyltetrahydrofolate + 5-amino-1-(5-phospho-beta-D-ribosyl)imidazole-4-carboxamide = 5-formamido-1-(5-phospho-D-ribosyl)imidazole-4-carboxamide + (6S)-5,6,7,8-tetrahydrofolate. The catalysed reaction is IMP + H2O = 5-formamido-1-(5-phospho-D-ribosyl)imidazole-4-carboxamide. Its pathway is purine metabolism; IMP biosynthesis via de novo pathway; 5-formamido-1-(5-phospho-D-ribosyl)imidazole-4-carboxamide from 5-amino-1-(5-phospho-D-ribosyl)imidazole-4-carboxamide (10-formyl THF route): step 1/1. It functions in the pathway purine metabolism; IMP biosynthesis via de novo pathway; IMP from 5-formamido-1-(5-phospho-D-ribosyl)imidazole-4-carboxamide: step 1/1. This is Bifunctional purine biosynthesis protein PurH from Bacillus cereus (strain ATCC 14579 / DSM 31 / CCUG 7414 / JCM 2152 / NBRC 15305 / NCIMB 9373 / NCTC 2599 / NRRL B-3711).